The following is a 320-amino-acid chain: Reticulocalbin-2 (320 aa).

The N-terminal stretch at 1 to 25 (MRLGPRPAALGLLLPLLLYAAVAGA) is a signal peptide. EF-hand domains follow at residues 64–99 (EQQRRLQSIIKKIDSDSDGFLTENELSQWIQMSFKH) and 100–135 (YAMQEAKQQFVEYDKNSDGAVTWDEYNIQMYDRVID). 8 residues coordinate Ca(2+): Asp77, Asp79, Asp81, Glu88, Asp113, Asn115, Asp117, and Glu124. Residue Thr140 is modified to Phosphothreonine. 4 EF-hand domains span residues 150 to 185 (FRQLHLKDKKRFEKANQDSGPGLSLEEFIAFEHPEE), 189 to 224 (MTEFVIQEALEEHDKNGDGFVSLEEFLGDYRRDPTA), 230 to 265 (WILVEKDRFVNDYDKDNDGRLDPQELLSWVVPNNQG), and 266 to 301 (IAQEEALHLIDEMDLNSDKKLSEEEILENQDLFLTS). Positions 167, 176, 202, 204, 206, 213, 243, 245, 247, 249, 254, 279, 281, 283, 285, and 290 each coordinate Ca(2+). The short motif at 317-320 (HDEL) is the Prevents secretion from ER element.

Belongs to the CREC family.

The protein localises to the endoplasmic reticulum lumen. Its function is as follows. Not known. Binds calcium. This chain is Reticulocalbin-2 (Rcn2), found in Mus musculus (Mouse).